The primary structure comprises 403 residues: RNA-binding motif, single-stranded-interacting protein 1 (403 aa).

Residues 30–56 (PAHPMAPPSPSTTSSNNNSSSSSNSGW) form a disordered region. A compositionally biased stretch (low complexity) spans 40-54 (STTSSNNNSSSSSNS). RRM domains follow at residues 62–135 (TNLY…MAKQ) and 141–226 (TNLY…FADG). T208 carries the post-translational modification Phosphothreonine. Residues 382-395 (GQQQVAVETSNDHS) are compositionally biased toward polar residues. The interval 382-403 (GQQQVAVETSNDHSPYTFPPNK) is disordered.

As to expression, ubiquitous. Expressed in all tissues except testis.

The protein localises to the nucleus. In terms of biological role, single-stranded DNA binding protein that interacts with the region upstream of the MYC gene. Binds specifically to the DNA sequence motif 5'-[AT]CT[AT][AT]T-3'. Probably has a role in DNA replication. This chain is RNA-binding motif, single-stranded-interacting protein 1 (Rbms1), found in Mus musculus (Mouse).